A 70-amino-acid chain; its full sequence is Large ribosomal subunit protein uL29 (70 aa).

This sequence belongs to the universal ribosomal protein uL29 family.

The protein is Large ribosomal subunit protein uL29 of Clostridium novyi (strain NT).